A 258-amino-acid chain; its full sequence is Indole-3-glycerol phosphate synthase (258 aa).

It belongs to the TrpC family.

It catalyses the reaction 1-(2-carboxyphenylamino)-1-deoxy-D-ribulose 5-phosphate + H(+) = (1S,2R)-1-C-(indol-3-yl)glycerol 3-phosphate + CO2 + H2O. It participates in amino-acid biosynthesis; L-tryptophan biosynthesis; L-tryptophan from chorismate: step 4/5. In Nautilia profundicola (strain ATCC BAA-1463 / DSM 18972 / AmH), this protein is Indole-3-glycerol phosphate synthase.